The following is a 198-amino-acid chain: Recombination protein RecR (198 aa).

The segment at 57–72 adopts a C4-type zinc-finger fold; it reads CTVCGHITDTDPCYIC. Residues 80–175 enclose the Toprim domain; that stretch reads TTICVVQDPK…KVTRIAHGLP (96 aa).

This sequence belongs to the RecR family.

In terms of biological role, may play a role in DNA repair. It seems to be involved in an RecBC-independent recombinational process of DNA repair. It may act with RecF and RecO. The sequence is that of Recombination protein RecR from Geobacillus sp. (strain WCH70).